A 118-amino-acid polypeptide reads, in one-letter code: UPF0342 protein BCG9842_B4422 (118 aa).

It belongs to the UPF0342 family.

The polypeptide is UPF0342 protein BCG9842_B4422 (Bacillus cereus (strain G9842)).